The chain runs to 247 residues: UPF0612 protein P20C8.01c (247 aa).

Coiled-coil stretches lie at residues 27–63 (IKRY…MKYE) and 138–225 (DTVQ…DARS).

Belongs to the UPF0612 family.

The protein resides in the cytoplasm. This Schizosaccharomyces pombe (strain 972 / ATCC 24843) (Fission yeast) protein is UPF0612 protein P20C8.01c.